We begin with the raw amino-acid sequence, 436 residues long: UPF0597 protein YhaM (436 aa).

Belongs to the UPF0597 family.

The protein is UPF0597 protein YhaM of Salmonella paratyphi C (strain RKS4594).